We begin with the raw amino-acid sequence, 1384 residues long: DNA-directed RNA polymerase subunit beta (1384 aa).

The protein belongs to the RNA polymerase beta chain family. As to quaternary structure, the RNAP catalytic core consists of 2 alpha, 1 beta, 1 beta' and 1 omega subunit. When a sigma factor is associated with the core the holoenzyme is formed, which can initiate transcription.

The enzyme catalyses RNA(n) + a ribonucleoside 5'-triphosphate = RNA(n+1) + diphosphate. Functionally, DNA-dependent RNA polymerase catalyzes the transcription of DNA into RNA using the four ribonucleoside triphosphates as substrates. This is DNA-directed RNA polymerase subunit beta from Xylella fastidiosa (strain M23).